The chain runs to 524 residues: Mitochondrial-processing peptidase subunit alpha (524 aa).

A mitochondrion-targeting transit peptide spans 1-32 (MATAVWAAARLLRGSAALCARPKFGSPAHRRF). Position 63 is an N6-succinyllysine (K63).

This sequence belongs to the peptidase M16 family. In terms of assembly, heterodimer of PMPCA (alpha) and PMPCB (beta) subunits, forming the mitochondrial processing protease (MPP) in which PMPCA is involved in substrate recognition and binding and PMPCB is the catalytic subunit.

The protein localises to the mitochondrion matrix. The protein resides in the mitochondrion inner membrane. Substrate recognition and binding subunit of the essential mitochondrial processing protease (MPP), which cleaves the mitochondrial sequence off newly imported precursors proteins. The polypeptide is Mitochondrial-processing peptidase subunit alpha (Pmpca) (Rattus norvegicus (Rat)).